Consider the following 146-residue polypeptide: Hemoglobin subunit beta-2 (146 aa).

The Globin domain maps to 2–146 (HWSAEEKQLI…VAHALARRYH (145 aa)). His63 and His92 together coordinate heme b.

The protein belongs to the globin family. Heterotetramer of two alpha chains and two beta chains. As to expression, red blood cells.

Involved in oxygen transport from the lung to the various peripheral tissues. The sequence is that of Hemoglobin subunit beta-2 (HBB2) from Naja naja (Indian cobra).